Consider the following 539-residue polypeptide: MSVKGITPQELAAYGIHNVSEIVYNPSYDLLFEEETKPTLEGYERGTLTTTGAIAVDTGIFTGRSPKDKYIVRDAITQDTVWWADQGKGKNDNKPLSQEIWNHLKGLVTEQLSGKRLFVVDTFCGANADTRLQVRFITEVAWQAHFVKNMFIRPSDEELARFEPDFIVMNGAKCTNPQWKEQGLNSENFVAFNLTERMQLIGGTWYGGEMKKGMFSMMNYLLPLKGIASMHCSANVGEKGDVAIFFGLSGTGKTTLSTDPKRKLIGDDEHGWDDDGVFNFEGGCYAKTIKLSEEAEPDIYHAIKRDALLENVVVLADGTVDFNDGSKTENTRVSYPIYHIDNIVKPVSKAGHATKVIFLTADAFGVLPPVSRLTANQTQYHFLSGFTAKLAGTERGVTEPTPTFSACFGAAFLSLHPTQYAEVLVKRMQAVGAQAYLVNTGWNGTGKRISIKDTRAIIDAILNGEIDKAETFTLPIFDLAVPMALPGVNPDILDPRDTYADKAQWQEKAEDLAKRFATNFDKYTDTPAGAALVSAGPKI.

3 residues coordinate substrate: R64, Y206, and K212. ATP contacts are provided by residues K212, H231, and 247–255 (GLSGTGKTT). 2 residues coordinate Mn(2+): K212 and H231. Mn(2+) is bound at residue D268. Residues E296, R332, 448-449 (RI), and T454 contribute to the ATP site. Position 332 (R332) interacts with substrate.

This sequence belongs to the phosphoenolpyruvate carboxykinase (ATP) family. As to quaternary structure, monomer. Mn(2+) is required as a cofactor.

Its subcellular location is the cytoplasm. It catalyses the reaction oxaloacetate + ATP = phosphoenolpyruvate + ADP + CO2. Its pathway is carbohydrate biosynthesis; gluconeogenesis. Functionally, involved in the gluconeogenesis. Catalyzes the conversion of oxaloacetate (OAA) to phosphoenolpyruvate (PEP) through direct phosphoryl transfer between the nucleoside triphosphate and OAA. This chain is Phosphoenolpyruvate carboxykinase (ATP), found in Yersinia pestis bv. Antiqua (strain Antiqua).